Here is a 372-residue protein sequence, read N- to C-terminus: GTPase Obg (372 aa).

In terms of domain architecture, Obg spans 1-159 (MAFVDEAKFF…KWLLIELKLM (159 aa)). Positions 121 to 141 (GSGGMGNPHFSSGSNRTPRVA) are disordered. The 170-residue stretch at 160–329 (ADVGLVGLPN…LVKLIGDIID (170 aa)) folds into the OBG-type G domain. GTP contacts are provided by residues 166–173 (GLPNAGKS), 191–195 (FTTLE), 213–216 (DIPG), 280–283 (NKCD), and 310–312 (SAI). Mg(2+) is bound by residues Ser-173 and Thr-193. The disordered stretch occupies residues 346–372 (QDLKKQKEEERRQELKKQKEEEQAKDE).

Belongs to the TRAFAC class OBG-HflX-like GTPase superfamily. OBG GTPase family. Monomer. Requires Mg(2+) as cofactor.

The protein resides in the cytoplasm. Functionally, an essential GTPase which binds GTP, GDP and possibly (p)ppGpp with moderate affinity, with high nucleotide exchange rates and a fairly low GTP hydrolysis rate. Plays a role in control of the cell cycle, stress response, ribosome biogenesis and in those bacteria that undergo differentiation, in morphogenesis control. In Desulfotalea psychrophila (strain LSv54 / DSM 12343), this protein is GTPase Obg.